We begin with the raw amino-acid sequence, 552 residues long: MDQSGVLLWVKAEPFLVGALQEPPPSKFSLHYLRKIATYVRTRATEGAYPHLYWPTWRHIACGKLQLAKDLAWLYFEMFDNLSVRTPEERLEWSEILSNCATEEEVEKQRSQLYVDTLQFLLFLYIQQLNRISLRTSLIGEEWPSRRSRPQSPSPAERPSCHNKNWNDYSHQAFVCNHLSELLELLLDPEQLTASFHSTHSSLLSRDAVTALSFLIEGTVSRAKKVYPLHQLALWQPLHVASGFSKSSKTFSLYKLEAWLRASLTTNPFGPSACLKSGKKLAWAHQVEGSTKRAKIACNAHMAPRLHRIVVMSQVYKQTLAKSSETLVGAHVRAHRCSESFIYLLSPLRSMTIEKCRNSTFVLGPVETTLHLHDCENLKVIAVCHRLSISSTTSCTFHIMTPSRPLILSGNQTVTFAPFHTHYPMLEDHMARTGLATVPNYWDNPMVVCKEGSVTSLFRLLPPSEFYIFVIPFEMEGDTAEIPGGLPSAYQKALAQREESIHIWQKTVKEARLTKEQRKQFQALVENKFYEWLVSTGHRQQLDSLVPTPAAS.

In terms of domain architecture, C-CAP/cofactor C-like spans 304-435 (PRLHRIVVMS…LEDHMARTGL (132 aa)).

Belongs to the TBCC family. In terms of tissue distribution, expressed in brain and testis (at protein level).

The protein localises to the cytoplasm. It is found in the cytoskeleton. It localises to the microtubule organizing center. The protein resides in the centrosome. Its subcellular location is the spindle pole. Its function is as follows. Plays a role in the regulation of centrosome and Golgi apparatus positioning, with consequences on cell shape and cell migration. In Mus musculus (Mouse), this protein is TBCC domain-containing protein 1 (Tbccd1).